A 414-amino-acid polypeptide reads, in one-letter code: Glucose-1-phosphate adenylyltransferase (414 aa).

Residues glycine 164, 181 to 182 (EK), and serine 199 each bind alpha-D-glucose 1-phosphate.

The protein belongs to the bacterial/plant glucose-1-phosphate adenylyltransferase family. Homotetramer.

The catalysed reaction is alpha-D-glucose 1-phosphate + ATP + H(+) = ADP-alpha-D-glucose + diphosphate. Its pathway is glycan biosynthesis; glycogen biosynthesis. In terms of biological role, involved in the biosynthesis of ADP-glucose, a building block required for the elongation reactions to produce glycogen. Catalyzes the reaction between ATP and alpha-D-glucose 1-phosphate (G1P) to produce pyrophosphate and ADP-Glc. This is Glucose-1-phosphate adenylyltransferase from Leifsonia xyli subsp. xyli (strain CTCB07).